The primary structure comprises 393 residues: tRNA (guanine-N(7)-)-methyltransferase (393 aa).

Residues Glu-124, Glu-149, and Asp-176 each coordinate S-adenosyl-L-methionine. Asp-232 is a binding site for substrate.

It belongs to the class I-like SAM-binding methyltransferase superfamily. TrmB family.

The catalysed reaction is guanosine(46) in tRNA + S-adenosyl-L-methionine = N(7)-methylguanosine(46) in tRNA + S-adenosyl-L-homocysteine. It participates in tRNA modification; N(7)-methylguanine-tRNA biosynthesis. Its function is as follows. Catalyzes the formation of N(7)-methylguanine at position 46 (m7G46) in tRNA. The chain is tRNA (guanine-N(7)-)-methyltransferase from Helicobacter pylori (strain HPAG1).